The chain runs to 229 residues: Large ribosomal subunit protein uL1 (229 aa).

It belongs to the universal ribosomal protein uL1 family. In terms of assembly, part of the 50S ribosomal subunit.

Binds directly to 23S rRNA. The L1 stalk is quite mobile in the ribosome, and is involved in E site tRNA release. Functionally, protein L1 is also a translational repressor protein, it controls the translation of the L11 operon by binding to its mRNA. This is Large ribosomal subunit protein uL1 from Flavobacterium psychrophilum (strain ATCC 49511 / DSM 21280 / CIP 103535 / JIP02/86).